The sequence spans 569 residues: Urease subunit alpha (569 aa).

Residues 131-569 form the Urease domain; sequence GGIDAHIHFI…VPMAQRYFLF (439 aa). The Ni(2+) site is built by His136, His138, and Lys219. Lys219 is modified (N6-carboxylysine). Position 221 (His221) interacts with substrate. Positions 248 and 274 each coordinate Ni(2+). The active-site Proton donor is His322. Ni(2+) is bound at residue Asp362.

The protein belongs to the metallo-dependent hydrolases superfamily. Urease alpha subunit family. As to quaternary structure, heterotrimer of UreA (gamma), UreB (beta) and UreC (alpha) subunits. Three heterotrimers associate to form the active enzyme. Ni cation is required as a cofactor. In terms of processing, carboxylation allows a single lysine to coordinate two nickel ions.

It is found in the cytoplasm. It carries out the reaction urea + 2 H2O + H(+) = hydrogencarbonate + 2 NH4(+). It functions in the pathway nitrogen metabolism; urea degradation; CO(2) and NH(3) from urea (urease route): step 1/1. This Bacillus sp. (strain TB-90) protein is Urease subunit alpha.